Reading from the N-terminus, the 288-residue chain is ATP synthase gamma chain (288 aa).

Belongs to the ATPase gamma chain family. F-type ATPases have 2 components, CF(1) - the catalytic core - and CF(0) - the membrane proton channel. CF(1) has five subunits: alpha(3), beta(3), gamma(1), delta(1), epsilon(1). CF(0) has three main subunits: a, b and c.

Its subcellular location is the cell membrane. In terms of biological role, produces ATP from ADP in the presence of a proton gradient across the membrane. The gamma chain is believed to be important in regulating ATPase activity and the flow of protons through the CF(0) complex. In Staphylococcus saprophyticus subsp. saprophyticus (strain ATCC 15305 / DSM 20229 / NCIMB 8711 / NCTC 7292 / S-41), this protein is ATP synthase gamma chain.